We begin with the raw amino-acid sequence, 335 residues long: Phosphate acyltransferase (335 aa).

The protein belongs to the PlsX family. In terms of assembly, homodimer. Probably interacts with PlsY.

It is found in the cytoplasm. The catalysed reaction is a fatty acyl-[ACP] + phosphate = an acyl phosphate + holo-[ACP]. Its pathway is lipid metabolism; phospholipid metabolism. Its function is as follows. Catalyzes the reversible formation of acyl-phosphate (acyl-PO(4)) from acyl-[acyl-carrier-protein] (acyl-ACP). This enzyme utilizes acyl-ACP as fatty acyl donor, but not acyl-CoA. This is Phosphate acyltransferase from Streptococcus pyogenes serotype M1.